The primary structure comprises 296 residues: Fructose-bisphosphate aldolase class 1 (296 aa).

Glu175 (proton acceptor) is an active-site residue. Catalysis depends on Lys212, which acts as the Schiff-base intermediate with dihydroxyacetone-P.

The protein belongs to the class I fructose-bisphosphate aldolase family.

The catalysed reaction is beta-D-fructose 1,6-bisphosphate = D-glyceraldehyde 3-phosphate + dihydroxyacetone phosphate. It functions in the pathway carbohydrate degradation; glycolysis; D-glyceraldehyde 3-phosphate and glycerone phosphate from D-glucose: step 4/4. This chain is Fructose-bisphosphate aldolase class 1, found in Staphylococcus haemolyticus (strain JCSC1435).